The following is a 238-amino-acid chain: COMM domain-containing protein 10 homolog Vlet (238 aa).

Residues 43 to 77 (ASASATSSTVGTSVTTTGRVDSSTEENPTSNTEPE) show a composition bias toward low complexity. The interval 43–78 (ASASATSSTVGTSVTTTGRVDSSTEENPTSNTEPEY) is disordered. In terms of domain architecture, COMM spans 161–225 (VIEDVAWKLN…SIQGELDAML (65 aa)).

This sequence belongs to the COMM domain-containing protein 10 family. In terms of assembly, component of the commander complex consisting of the CCC subcomplex and the retriever subcomplex. Component of the CCC subcomplex. Interacts with Smn; along with Sbat and Hez may form an accessory subcomplex involved in SMN complex function.

Its function is as follows. Scaffold protein in the commander complex that is essential for endosomal recycling of transmembrane cargos; the commander complex is composed of the CCC subcomplex and the retriever subcomplex. May modulate activity of cullin-RING E3 ubiquitin ligase (CRL) complexes. May down-regulate activation of NF-kappa-B. May have an accessory function in the survival motor neuron (SMN) complex. Required for neuromuscular function and organismal viability. In Drosophila melanogaster (Fruit fly), this protein is COMM domain-containing protein 10 homolog Vlet.